Consider the following 340-residue polypeptide: Alcohol dehydrogenase (340 aa).

7 residues coordinate Zn(2+): cysteine 37, histidine 58, cysteine 89, cysteine 92, cysteine 95, cysteine 103, and cysteine 145.

This sequence belongs to the zinc-containing alcohol dehydrogenase family. It depends on Zn(2+) as a cofactor.

The enzyme catalyses a primary alcohol + NAD(+) = an aldehyde + NADH + H(+). It catalyses the reaction a secondary alcohol + NAD(+) = a ketone + NADH + H(+). In Staphylococcus epidermidis (strain ATCC 35984 / DSM 28319 / BCRC 17069 / CCUG 31568 / BM 3577 / RP62A), this protein is Alcohol dehydrogenase (adh).